A 94-amino-acid chain; its full sequence is DNA-directed RNA polymerase subunit Rpo11 (94 aa).

The protein belongs to the archaeal Rpo11/eukaryotic RPB11/RPC19 RNA polymerase subunit family. In terms of assembly, part of the RNA polymerase complex.

Its subcellular location is the cytoplasm. The enzyme catalyses RNA(n) + a ribonucleoside 5'-triphosphate = RNA(n+1) + diphosphate. In terms of biological role, DNA-dependent RNA polymerase (RNAP) catalyzes the transcription of DNA into RNA using the four ribonucleoside triphosphates as substrates. In Halobacterium salinarum (strain ATCC 700922 / JCM 11081 / NRC-1) (Halobacterium halobium), this protein is DNA-directed RNA polymerase subunit Rpo11.